The sequence spans 348 residues: Type IV methyl-directed restriction enzyme EcoKMcrBC (348 aa).

Its function is as follows. Modifies the specificity of McrB restriction by expanding the range of modified sequences restricted. Does not bind to DNA. The polypeptide is Type IV methyl-directed restriction enzyme EcoKMcrBC (mcrC) (Escherichia coli (strain K12)).